Consider the following 224-residue polypeptide: Uracil-DNA glycosylase (224 aa).

The active-site Proton acceptor is Asp-64.

It belongs to the uracil-DNA glycosylase (UDG) superfamily. UNG family.

The protein resides in the cytoplasm. The catalysed reaction is Hydrolyzes single-stranded DNA or mismatched double-stranded DNA and polynucleotides, releasing free uracil.. In terms of biological role, excises uracil residues from the DNA which can arise as a result of misincorporation of dUMP residues by DNA polymerase or due to deamination of cytosine. The sequence is that of Uracil-DNA glycosylase from Geobacillus sp. (strain WCH70).